Here is a 556-residue protein sequence, read N- to C-terminus: 2-succinyl-5-enolpyruvyl-6-hydroxy-3-cyclohexene-1-carboxylate synthase (556 aa).

The protein belongs to the TPP enzyme family. MenD subfamily. As to quaternary structure, homodimer. Mg(2+) serves as cofactor. It depends on Mn(2+) as a cofactor. Requires thiamine diphosphate as cofactor.

The catalysed reaction is isochorismate + 2-oxoglutarate + H(+) = 5-enolpyruvoyl-6-hydroxy-2-succinyl-cyclohex-3-ene-1-carboxylate + CO2. It participates in quinol/quinone metabolism; 1,4-dihydroxy-2-naphthoate biosynthesis; 1,4-dihydroxy-2-naphthoate from chorismate: step 2/7. The protein operates within quinol/quinone metabolism; menaquinone biosynthesis. In terms of biological role, catalyzes the thiamine diphosphate-dependent decarboxylation of 2-oxoglutarate and the subsequent addition of the resulting succinic semialdehyde-thiamine pyrophosphate anion to isochorismate to yield 2-succinyl-5-enolpyruvyl-6-hydroxy-3-cyclohexene-1-carboxylate (SEPHCHC). The sequence is that of 2-succinyl-5-enolpyruvyl-6-hydroxy-3-cyclohexene-1-carboxylate synthase from Escherichia coli O7:K1 (strain IAI39 / ExPEC).